We begin with the raw amino-acid sequence, 354 residues long: Uroporphyrinogen decarboxylase (354 aa).

Residues 27–31, D77, Y154, T209, and H327 each bind substrate; that span reads RQAGR.

This sequence belongs to the uroporphyrinogen decarboxylase family. Homodimer.

The protein localises to the cytoplasm. The catalysed reaction is uroporphyrinogen III + 4 H(+) = coproporphyrinogen III + 4 CO2. Its pathway is porphyrin-containing compound metabolism; protoporphyrin-IX biosynthesis; coproporphyrinogen-III from 5-aminolevulinate: step 4/4. Functionally, catalyzes the decarboxylation of four acetate groups of uroporphyrinogen-III to yield coproporphyrinogen-III. The sequence is that of Uroporphyrinogen decarboxylase from Pseudomonas putida (strain GB-1).